The following is a 138-amino-acid chain: MKGLLPLAWFLACSVPAVQGGLLDLKSMIEKVTGKNALTNYGFYGCYCGWGGRGTPKDGTDWCCWAHDHCYGRLEEKGCNIRTQSYKYRFAWGVVTCEPGPFCHVNLCACDRKLVYCLKRNLRSYNPQYQYFPNILCS.

Residues 1 to 20 (MKGLLPLAWFLACSVPAVQG) form the signal peptide. Cystine bridges form between C46/C137, C48/C64, C63/C117, C70/C110, C79/C103, and C97/C108. Ca(2+)-binding residues include Y47, G49, and G51. Residue H67 is part of the active site. D68 contacts Ca(2+). D111 is an active-site residue.

Belongs to the phospholipase A2 family. Ca(2+) serves as cofactor. In terms of processing, this enzyme lacks one of the seven disulfide bonds found in similar PLA2 proteins. As to expression, heart, placenta and less abundantly, in lung. Detected in the outer and inner plexiform layers of the retina (at protein level). Expressed in monocytes and macrophages.

It is found in the secreted. It localises to the cell membrane. The protein localises to the cytoplasmic vesicle. Its subcellular location is the phagosome. The protein resides in the recycling endosome. It is found in the golgi apparatus. It localises to the cis-Golgi network. The protein localises to the trans-Golgi network. It catalyses the reaction a 1,2-diacyl-sn-glycero-3-phosphocholine + H2O = a 1-acyl-sn-glycero-3-phosphocholine + a fatty acid + H(+). The catalysed reaction is 1-hexadecanoyl-2-(9Z-octadecenoyl)-sn-glycero-3-phosphocholine + H2O = 1-hexadecanoyl-sn-glycero-3-phosphocholine + (9Z)-octadecenoate + H(+). It carries out the reaction 1-hexadecanoyl-2-(5Z,8Z,11Z,14Z-eicosatetraenoyl)-sn-glycero-3-phosphocholine + H2O = 1-hexadecanoyl-sn-glycero-3-phosphocholine + (5Z,8Z,11Z,14Z)-eicosatetraenoate + H(+). The enzyme catalyses 1-hexadecanoyl-2-(9Z,12Z-octadecadienoyl)-sn-glycero-3-phosphoethanolamine + H2O = 1-hexadecanoyl-sn-glycero-3-phosphoethanolamine + (9Z,12Z)-octadecadienoate + H(+). It catalyses the reaction 1-hexadecanoyl-2-(5Z,8Z,11Z,14Z-eicosatetraenoyl)-sn-glycero-3-phosphoethanolamine + H2O = 1-hexadecanoyl-sn-glycero-3-phosphoethanolamine + (5Z,8Z,11Z,14Z)-eicosatetraenoate + H(+). The catalysed reaction is 1-octadecanoyl-2-(5Z,8Z,11Z,14Z-eicosatetraenoyl)-sn-glycero-3-phospho-(1D-myo-inositol) + H2O = 1-octadecanoyl-sn-glycero-3-phospho-(1D-myo-inositol) + (5Z,8Z,11Z,14Z)-eicosatetraenoate + H(+). It carries out the reaction 1-hexadecanoyl-2-(9Z-octadecenoyl)-sn-glycero-3-phosphoglycerol + H2O = 1-hexadecanoyl-sn-glycero-3-phosphoglycerol + (9Z)-octadecenoate + H(+). The enzyme catalyses N-hexadecanoyl-1,2-di-(9Z-octadecenoyl)-sn-glycero-3-phosphoethanolamine + H2O = N-hexadecanoyl-1-(9Z-octadecenoyl)-sn-glycero-3-phosphoethanolamine + (9Z)-octadecenoate + H(+). It catalyses the reaction 1'-[1,2-di-(9Z-octadecenoyl)-sn-glycero-3-phospho]-3'-[1-(9Z-octadecenoyl)-sn-glycero-3-phospho]-glycerol + H2O = 1',3'-bis-[1-(9Z-octadecenoyl)-sn-glycero-3-phospho]-glycerol + (9Z)-octadecenoate + H(+). The catalysed reaction is 1',3'-bis[1,2-di-(9Z-octadecenoyl)-sn-glycero-3-phospho]-glycerol + H2O = 1'-[1,2-di-(9Z-octadecenoyl)-sn-glycero-3-phospho]-3'-[1-(9Z-octadecenoyl)-sn-glycero-3-phospho]-glycerol + (9Z)-octadecenoate + H(+). Its pathway is lipid metabolism; phospholipid metabolism. The protein operates within lipid metabolism; leukotriene B4 biosynthesis. It functions in the pathway lipid metabolism; leukotriene C4 biosynthesis. Its activity is regulated as follows. Activated by cardiolipin. Its function is as follows. Secretory calcium-dependent phospholipase A2 that primarily targets extracellular phospholipids. Hydrolyzes the ester bond of the fatty acyl group attached at sn-2 position of phospholipids (phospholipase A2 activity), preferentially releasing fatty acyl groups with a low degree of unsaturation such as oleoyl (C18:1) and linoleoyl (C18:2) groups. Hydrolyzes low-density lipoprotein (LDL) phospholipids releasing unsaturated fatty acids that drive macrophage polarization toward an M2 phenotype. May act in an autocrine and paracrine manner. Contributes to lipid remodeling of cellular membranes at different subcellular locations and generation of lipid mediators involved in pathogen clearance. Cleaves sn-2 fatty acyl chains of cardiolipin, a major component of the inner membrane of mitochondria and bacterial membranes. Promotes phagocytosis of bacteria in macrophages through production of lysophosphatidylethanolamines. Displays bactericidal activity against Gram-positive bacteria by directly hydrolyzing phospholipids of the bacterial membrane. Promotes phagocytosis and killing of ingested fungi likely through controlling phagosome-lysosome fusion and phagosome maturation. Plays a role in biosynthesis of cysteinyl leukotrienes (CysLTs) in myeloid cells. In eosinophils, triggers perinuclear arachidonate release and LTC4 synthesis in a PLA2G4A-independent way. In neutrophils, amplifies CysLTs biosynthesis initiated by PLA2G4A. Promotes immune complex clearance in macrophages via stimulating synthesis of CysLTs, which act through CYSLTR1 to trigger phagocytosis. May regulate antigen processing in antigen-presenting cells. In pulmonary macrophages regulates IL33 production required for activation of group 2 innate lymphoid cells. May play a role in the biosynthesis of N-acyl ethanolamines that regulate energy metabolism. Hydrolyzes N-acyl phosphatidylethanolamines to N-acyl lysophosphatidylethanolamines, which are further cleaved by a lysophospholipase D to release N-acyl ethanolamines. This is Phospholipase A2 group V (PLA2G5) from Homo sapiens (Human).